The chain runs to 142 residues: Cystatin-8 (142 aa).

A signal peptide spans 1 to 19; sequence MAKPLWLSLILFIIPVALA. The N-linked (GlcNAc...) asparagine glycan is linked to Asn-39. A Secondary area of contact motif is present at residues 77-81; the sequence is QITDR. Cystine bridges form between Cys-95–Cys-105 and Cys-119–Cys-139. Residue Asn-100 is glycosylated (N-linked (GlcNAc...) asparagine).

The protein belongs to the cystatin family. Proximal caput region of the epididymis. Lower expression in the testis. Within the testis it is localized to the elongating spermatids, whereas within the epididymis it is exclusively synthesized by the proximal caput epithelium.

Its subcellular location is the secreted. Its function is as follows. Performs a specialized role during sperm development and maturation. This is Cystatin-8 (Cst8) from Mus musculus (Mouse).